Reading from the N-terminus, the 392-residue chain is Probable tRNA pseudouridine synthase D 1 (392 aa).

The Nucleophile role is filled by D92. A TRUD domain is found at 167–354 (YFLNYYGVQR…FIGDRRAMIG (188 aa)).

It belongs to the pseudouridine synthase TruD family.

The catalysed reaction is uridine(13) in tRNA = pseudouridine(13) in tRNA. In terms of biological role, could be responsible for synthesis of pseudouridine from uracil-13 in transfer RNAs. In Methanocaldococcus jannaschii (strain ATCC 43067 / DSM 2661 / JAL-1 / JCM 10045 / NBRC 100440) (Methanococcus jannaschii), this protein is Probable tRNA pseudouridine synthase D 1.